An 810-amino-acid chain; its full sequence is MSHEKNEASGNPEAQSWKAQEAMLGVKTEVSRWRAVKNCLYRHLVKVLGEDWIFLLLLGALMALVSWAMDFIGSRGLRFYKYLFAMVEGNLGLQYLVWVCYPLILILFSSLFCQIVSPQAVGSGIPELKTIIRGAVLHEYLTLRTFVAKTVGLTVALSAGFPLGKEGPFVHIASICATLLNQLLCFISGRREEPYYLRADILTVGCALGISCCFGTPLAGVLFSIEVTCSHFGVRSYWRGFLGGAFSAFIFRVLSVWVKDTVTLTALFKTNFRGDIPFDLQELPAFAIIGIASGFFGALFVYLNRQIIVFMRKKNFVTKILKKQRLIYPAVVTFVLATLRFPPGVGQFFGAGLMPRETINSLFDNYTWTKTIDPRGLGNSAQWFIPHLNIFIVMALYFVMHFWMAALAVTMPVPCGAFVPVFNLGAVLGRFVGELMALLFPDGLVSNGNLYHILPGEYAVIGAAAMTGAVTHAVSTAVICFELTGQISHVLPMMVAVILANMVAQGLQPSLYDSIIQIKKLPYLPELSWSSANKYNIQVGDIMVRDVTSIASTSTYGDLLHVLRQTKLKFFPFVDTPETNTLLGSIERTEVEGLLQRRISAYRRQPATAAEAEEEGRNGERGASFTGDVPGEAETSFAYIDQEEAEGQQQREGLEAVKVQTEDPRPPSPVPAEEPTQTSGIYQKKHKGTGQVASRFEEMLTLEEIYQWEQREKNVVVNFETCRIDQSPFQLVEGTSLQKTHTLFSLLGLDRAYVTSMGKLVGVVALAEIQAAIEGSYQKGFRLPPPLASFRDAKNARNSGRTATSNSSGK.

Topologically, residues S2–L48 are cytoplasmic. 2 helical membrane-spanning segments follow: residues G49–M86 and L93–V116. The Selectivity filter part_1 motif lies at G122–P126. S123 is a chloride binding site. An intramembrane region (helical) is located at residues I125–I132. The next 2 helical transmembrane spans lie at L141–G160 and E166–L184. The short motif at G164 to P168 is the Selectivity filter part_2 element. 2 consecutive intramembrane regions (helical) follow at residues I201 to C213 and P217 to I225. 3 helical membrane passes run Y237 to L254, L283 to M311, and I320 to L339. N-linked (GlcNAc...) asparagine glycosylation is present at N365. 2 helical membrane passes run N389–A408 and G416–L439. A Selectivity filter part_3 motif is present at residues G416–P420. F418 lines the chloride pocket. Residues G456–V470 constitute an intramembrane region (helical). Positions T471–H472 form an intramembrane region, note=Loop between two helices. Positions A473 to T484 form an intramembrane region, helical. The segment at residues G485–H489 is an intramembrane region (note=Loop between two helices). A helical membrane pass occupies residues V490 to G506. The Cytoplasmic portion of the chain corresponds to L507–K810. Y512 contributes to the chloride binding site. One can recognise a CBS 1 domain in the interval M543 to A601. Disordered regions lie at residues R604–G631 and K658–G688. Residues I724–F781 form the CBS 2 domain.

This sequence belongs to the chloride channel (TC 2.A.49) family. ClC-0 subfamily. In terms of assembly, homodimer. Each subunit has channel activity ('Double barreled channel').

The protein resides in the membrane. Functionally, voltage-gated chloride channel. This channel is thought to ensure the high conductance of the non-innervated membrane of the electrocyte necessary for efficient current generation caused by sodium influx through the acetylcholine receptor at the innervated membrane. This is Chloride channel protein from Tetronarce californica (Pacific electric ray).